The primary structure comprises 374 residues: MSAQVMLEEMARKYAINAVKADKEGNAEEAITNYKKAIEVLAQLVSLYRDGSTAAIYEQMINEYKRRIEVLKELIPADGAGNGNGKHSQVSVDDLVMKEKPKVNFNDIVGLEDVKEALKEAIVYPTRRPDLFPLGWPRGILVYGPPGCGKTMIAAAVANEIDSYFIQVDAASVMSKWLGEAEKNVAKIFNSARELSKKDGKPVIIFIDEIDALLGTYNSENGGEVRVRNQFLKEMDGLQDKSENFKVYVIGATNKPWRLDEPFLRRFQKRIYIRLPDIEQRKSLLLHYTSKIKMDNVNIDELAKMTEGYTASDIKDIVQAAHIRVVKEMFDKKLEQPRAVNMEDFKEILKIRKPSVNSEVIKVYEAWHEKYKAL.

One can recognise an MIT domain in the interval 11-73 (ARKYAINAVK…YKRRIEVLKE (63 aa)). 144-151 (GPPGCGKT) contributes to the ATP binding site.

It belongs to the AAA ATPase family. In terms of assembly, interacts with CdvB.

It is found in the cytoplasm. It localises to the nucleoid. In terms of biological role, part of a cell division machinery. The CdvA, CdvB and CdvC proteins polymerize between segregating nucleoids and persist throughout cell division, forming a successively smaller structure during constriction. This chain is Cell division protein C, found in Sulfolobus acidocaldarius (strain ATCC 33909 / DSM 639 / JCM 8929 / NBRC 15157 / NCIMB 11770).